Here is a 196-residue protein sequence, read N- to C-terminus: Protein hunchback (196 aa).

Disordered stretches follow at residues Ser16–Asn56, Leu63–Met82, and Leu156–Ala196. Positions His17–His29 are enriched in basic residues. Composition is skewed to low complexity over residues Ser33–Gln43 and Gln65–Gln80. Positions Glu177–Ala196 are enriched in basic and acidic residues.

Belongs to the hunchback C2H2-type zinc-finger protein family.

The protein localises to the nucleus. Functionally, gap class segmentation protein that controls development of head structures. The sequence is that of Protein hunchback (hb) from Drosophila adunca (Fruit fly).